We begin with the raw amino-acid sequence, 247 residues long: Protein FAM133B (247 aa).

2 disordered regions span residues 19-38 (SRGP…NRPR) and 70-247 (KKEL…PDSP). Basic and acidic residues predominate over residues 70–80 (KKELEKHREKL). The residue at position 82 (Ser-82) is a Phosphoserine. Residues 89–102 (KKRQRKKKEKKKSG) show a composition bias toward basic residues. The span at 103-119 (RYSSSSSSSSDSSSSSS) shows a compositional bias: low complexity. A compositionally biased stretch (basic residues) spans 128–140 (QGKRRKKKKNRSH). The segment covering 165 to 176 (KDGTEKEKDIKG) has biased composition (basic and acidic residues). Phosphoserine is present on residues Ser-191, Ser-192, Ser-194, and Ser-196. The span at 211–221 (SSEEREKATEK) shows a compositional bias: basic and acidic residues. Positions 222-239 (TKKKKKHKKHSKKKKKKA) are enriched in basic residues.

The protein belongs to the FAM133 family.

This chain is Protein FAM133B (FAM133B), found in Homo sapiens (Human).